The following is a 374-amino-acid chain: Nucleosome assembly protein 1;3 (374 aa).

Residues 26-80 are a coiled coil; it reads VNALKNKLQNLAGQHSDVLENLTPKIRRRVEVLREIQGKHDEIETKFREERAALE. Ser-41 carries the post-translational modification Phosphoserine. The short motif at 47–62 is the Nuclear export signal element; the sequence is LTPKIRRRVEVLREIQ. The Nuclear localization signal signature appears at 222–227; sequence KKKPKK. The segment covering 299–339 has biased composition (acidic residues); the sequence is IEGEEFEIDNDDEDDIDEDEDEDEEDEDEDEEEDDEDEEEE. A disordered region spans residues 299–374; the sequence is IEGEEFEIDN…GERPPECKQQ (76 aa). The span at 343–355 shows a compositional bias: basic residues; that stretch reads TKKKPSVLHKKGG. The segment covering 364 to 374 has biased composition (basic and acidic residues); it reads QGERPPECKQQ. Cys-371 carries the post-translational modification Cysteine methyl ester. Cys-371 carries the S-farnesyl cysteine lipid modification. Residues 372–374 constitute a propeptide, removed in mature form; sequence KQQ.

Belongs to the nucleosome assembly protein (NAP) family. Can form homomeric and heteromeric protein complexes with NAP1;1, NAP1;2 and NAP1;4. Binds histone H2A and associates with chromatin in vivo. Ubiquitous.

The protein resides in the nucleus. It localises to the cytoplasm. Functionally, may modulate chromatin structure by regulation of nucleosome assembly/disassembly. May function in nucleotide excision repair (NER). Involved in somatic homologous recombination. Could be involved in response to abscisic acid (ABA) and to salt stress. The protein is Nucleosome assembly protein 1;3 (NAP1;3) of Arabidopsis thaliana (Mouse-ear cress).